A 186-amino-acid chain; its full sequence is Der GTPase-activating protein YihI (186 aa).

A disordered region spans residues 1 to 65 (MARTKKTRRI…AGSRHSAVDT (65 aa)). 2 stretches are compositionally biased toward basic and acidic residues: residues 9–25 (RITDIMPMRKTDKRPEN) and 34–45 (TRYELDAKSREE).

The protein belongs to the YihI family. As to quaternary structure, interacts with Der.

Functionally, a GTPase-activating protein (GAP) that modifies Der/EngA GTPase function. May play a role in ribosome biogenesis. This Histophilus somni (strain 129Pt) (Haemophilus somnus) protein is Der GTPase-activating protein YihI.